Reading from the N-terminus, the 548-residue chain is Chaperonin GroEL (548 aa).

ATP contacts are provided by residues 30 to 33 (TLGP), Lys-51, 87 to 91 (DGTTT), Gly-415, and Asp-494.

The protein belongs to the chaperonin (HSP60) family. In terms of assembly, forms a cylinder of 14 subunits composed of two heptameric rings stacked back-to-back. Interacts with the co-chaperonin GroES.

The protein localises to the cytoplasm. It catalyses the reaction ATP + H2O + a folded polypeptide = ADP + phosphate + an unfolded polypeptide.. Functionally, together with its co-chaperonin GroES, plays an essential role in assisting protein folding. The GroEL-GroES system forms a nano-cage that allows encapsulation of the non-native substrate proteins and provides a physical environment optimized to promote and accelerate protein folding. In Oleispira antarctica, this protein is Chaperonin GroEL.